A 327-amino-acid polypeptide reads, in one-letter code: Serum response factor homolog (327 aa).

Positions 12 to 43 (QKLQNASPALPEGTSSTPTPSSSTGLLPNGKK) are disordered. The segment covering 25 to 35 (TSSTPTPSSST) has biased composition (low complexity). Residues 45 to 105 (KGRVKIKMEY…GHVYTYATPK (61 aa)) form the MADS-box domain. Residues 189 to 225 (TFGEDDYNNDESGDDSDSEEASSDIKEEYQGSPTMVK) form a disordered region. Acidic residues predominate over residues 191–210 (GEDDYNNDESGDDSDSEEAS).

Expressed in muscle, varying with age, decreasing twofold during the first week of adulthood.

The protein localises to the nucleus. Its function is as follows. Transcription factor. Regulates myogenesis, in cooperation with transcription factors hlh-1 and hnd-1. Required for maintenance of muscle in adulthood. The protein is Serum response factor homolog of Caenorhabditis elegans.